Reading from the N-terminus, the 375-residue chain is Eukaryotic translation initiation factor 3 subunit F (375 aa).

In terms of domain architecture, MPN spans 30 to 166 (VVIQPQALFS…TRAYISAPVG (137 aa)). The disordered stretch occupies residues 307-375 (LGGESGSGES…EAQNGKEEKK (69 aa)). Residues 323-332 (QRGGKGGRGG) show a composition bias toward gly residues. Composition is skewed to basic and acidic residues over residues 336–345 (TQERSGEEAR) and 358–375 (RSYEERTNEAQNGKEEKK).

Belongs to the eIF-3 subunit F family. In terms of assembly, component of the eukaryotic translation initiation factor 3 (eIF-3) complex.

The protein resides in the cytoplasm. In terms of biological role, component of the eukaryotic translation initiation factor 3 (eIF-3) complex, which is involved in protein synthesis of a specialized repertoire of mRNAs and, together with other initiation factors, stimulates binding of mRNA and methionyl-tRNAi to the 40S ribosome. The eIF-3 complex specifically targets and initiates translation of a subset of mRNAs involved in cell proliferation. The polypeptide is Eukaryotic translation initiation factor 3 subunit F (Aspergillus niger (strain ATCC MYA-4892 / CBS 513.88 / FGSC A1513)).